We begin with the raw amino-acid sequence, 259 residues long: Peroxisomal membrane protein 11B (259 aa).

The residue at position 43 (Lys43) is an N6-acetyllysine. The tract at residues 211–259 (VVRNACDLFIPLDKLGLWRCGPGIVGLCGLVSSILSILTLIYPWLRLKP) is interaction with PEX19, PEX11G and FIS1 and peroxisome targeting. The chain crosses the membrane as a helical span at residues 234-254 (IVGLCGLVSSILSILTLIYPW).

It belongs to the peroxin-11 family. Homodimer. Heterodimer with PEX11G. Interacts with PEX19. Interacts with FIS1.

The protein localises to the peroxisome membrane. Functionally, involved in peroxisomal proliferation. May regulate peroxisome division by recruiting the dynamin-related GTPase DNM1L to the peroxisomal membrane. Promotes membrane protrusion and elongation on the peroxisomal surface. This chain is Peroxisomal membrane protein 11B (PEX11B), found in Pongo abelii (Sumatran orangutan).